The following is a 156-amino-acid chain: Peptide deformylase (156 aa).

The Fe cation site is built by Cys90 and His132. Residue Glu133 is part of the active site. Fe cation is bound at residue His136.

It belongs to the polypeptide deformylase family. Fe(2+) is required as a cofactor.

The enzyme catalyses N-terminal N-formyl-L-methionyl-[peptide] + H2O = N-terminal L-methionyl-[peptide] + formate. Its function is as follows. Removes the formyl group from the N-terminal Met of newly synthesized proteins. Requires at least a dipeptide for an efficient rate of reaction. N-terminal L-methionine is a prerequisite for activity but the enzyme has broad specificity at other positions. This chain is Peptide deformylase, found in Natranaerobius thermophilus (strain ATCC BAA-1301 / DSM 18059 / JW/NM-WN-LF).